The chain runs to 482 residues: Putative metabolite transport protein YfiG (482 aa).

The Cytoplasmic portion of the chain corresponds to 1-29; the sequence is MSTKKKEAVIGKESLAHKGLLRTITLVST. The chain crosses the membrane as a helical span at residues 30–50; it reads FGGLLFGYDTGVINGALPFMA. Topologically, residues 51-59 are extracellular; it reads TAGQLNLTP. A helical transmembrane segment spans residues 60–80; that stretch reads VTEGLVASSLLLGAAFGAMFG. Topologically, residues 81–92 are cytoplasmic; it reads GRLSDRHGRRKT. A helical membrane pass occupies residues 93 to 113; that stretch reads ILYLALLFIAATLGCTFSPNA. Residues 114 to 120 are Extracellular-facing; sequence SVMIAFR. The chain crosses the membrane as a helical span at residues 121 to 141; that stretch reads FLLGLAVGCASVTVPTFLAEI. Topologically, residues 142–155 are cytoplasmic; it reads SPAERRGRIVTQNE. Residues 156-176 form a helical membrane-spanning segment; it reads LMIVIGQLLAYTFNAIIGSTM. Over 177-184 the chain is Extracellular; that stretch reads GESANVWR. A helical membrane pass occupies residues 185–205; sequence YMLVIATLPAVVLWFGMLIVP. The Cytoplasmic segment spans residues 206-263; that stretch reads ESPRWLAAKGRMGDALRVLRQIREDSQAQQEIKEIKHAIEGTAKKAGFHDFQEPWIRR. The helical transmembrane segment at 264–284 threads the bilayer; it reads ILFIGIGIAIVQQITGVNSIM. The Extracellular portion of the chain corresponds to 285 to 301; that stretch reads YYGTEILREAGFQTEAA. A helical membrane pass occupies residues 302-322; sequence LIGNIANGVISVIAVIFGIWL. Residues 323 to 331 are Cytoplasmic-facing; sequence LGKVRRRPM. Helical transmembrane passes span 332 to 352 and 353 to 373; these read LIIG…LSIV and LEGT…FLAF. Residues 374 to 400 are Cytoplasmic-facing; that stretch reads QQTAISTVTWLMLSEIFPMHVRGLGMG. A helical membrane pass occupies residues 401–421; that stretch reads ISTFCLWTANFLIGFTFPILL. Residues 422-423 lie on the Extracellular side of the membrane; sequence NH. Residues 424 to 444 form a helical membrane-spanning segment; the sequence is IGMSATFFIFVAMNILAILFV. Topologically, residues 445–482 are cytoplasmic; the sequence is KKYVPETKGRSLEQLEHSFRQYGRRADQEIQNQTTHLS.

The protein belongs to the major facilitator superfamily. Sugar transporter (TC 2.A.1.1) family.

The protein resides in the cell membrane. The polypeptide is Putative metabolite transport protein YfiG (yfiG) (Bacillus subtilis (strain 168)).